The sequence spans 536 residues: Austinoid biosynthesis cluster protein W (536 aa).

The N-terminal stretch at 1–19 (MKHPTVALLGVGMLGCAAA) is a signal peptide. Disordered regions lie at residues 141 to 164 (GSAP…PGFP), 185 to 220 (SLPG…PGFS), 261 to 302 (FGVP…ASNG), 385 to 423 (PGSA…ASNG), and 491 to 536 (PSPT…SSAE). A compositionally biased stretch (low complexity) spans 195–208 (SGPSQAAAAPSTGD). The span at 209–220 (SGSGLPGSPGFS) shows a compositional bias: gly residues. 2 stretches are compositionally biased toward low complexity: residues 287 to 302 (AGNA…ASNG) and 408 to 423 (AGNA…ASNG).

It functions in the pathway secondary metabolite biosynthesis; terpenoid biosynthesis. Part of the gene cluster that mediates the biosynthesis of calidodehydroaustin, a fungal meroterpenoid. The first step of the pathway is the synthesis of 3,5-dimethylorsellinic acid by the polyketide synthase ausA. 3,5-dimethylorsellinic acid is then prenylated by the polyprenyl transferase ausN. Further epoxidation by the FAD-dependent monooxygenase ausM and cyclization by the probable terpene cyclase ausL lead to the formation of protoaustinoid A. Protoaustinoid A is then oxidized to spiro-lactone preaustinoid A3 by the combined action of the FAD-binding monooxygenases ausB and ausC, and the dioxygenase ausE. Acid-catalyzed keto-rearrangement and ring contraction of the tetraketide portion of preaustinoid A3 by ausJ lead to the formation of preaustinoid A4. The aldo-keto reductase ausK, with the help of ausH, is involved in the next step by transforming preaustinoid A4 into isoaustinone which is in turn hydroxylated by the P450 monooxygenase ausI to form austinolide. The cytochrome P450 monooxygenase ausG modifies austinolide to austinol. Austinol is further acetylated to austin by the O-acetyltransferase ausP, which spontaneously changes to dehydroaustin. The cytochrome P450 monooxygenase ausR then converts dehydroaustin is into 7-dehydrodehydroaustin. The hydroxylation catalyzed by ausR permits the O-acetyltransferase ausQ to add an additional acetyl group to the molecule, leading to the formation of acetoxydehydroaustin. The short chain dehydrogenase ausT catalyzes the reduction of the double bond present between carbon atoms 1 and 2 to convert 7-dehydrodehydroaustin into 1,2-dihydro-7-hydroxydehydroaustin. AusQ catalyzes not only an acetylation reaction but also the addition of the PKS ausV diketide product to 1,2-dihydro-7-hydroxydehydroaustin, forming precalidodehydroaustin. Finally, the iron/alpha-ketoglutarate-dependent dioxygenase converts precalidodehydroaustin into calidodehydroaustin. This is Austinoid biosynthesis cluster protein W from Aspergillus calidoustus.